The primary structure comprises 807 residues: Nucleolar complex protein 3 homolog (807 aa).

Disordered stretches follow at residues Lys-27–Asp-93 and Glu-167–Glu-191. The segment covering Lys-40–Gln-51 has biased composition (basic residues). Positions Ala-52–Arg-78 are enriched in basic and acidic residues. 2 stretches are compositionally biased toward acidic residues: residues Glu-79 to Asp-93 and Gln-174 to Ile-190. Lys-332 is covalently cross-linked (Glycyl lysine isopeptide (Lys-Gly) (interchain with G-Cter in SUMO2)). The stretch at Phe-449–Leu-489 forms a coiled coil.

This sequence belongs to the CBF/MAK21 family.

The protein resides in the nucleus. Its subcellular location is the nucleolus. It is found in the nucleus speckle. In terms of biological role, may be required for adipogenesis. The chain is Nucleolar complex protein 3 homolog (Noc3l) from Mus musculus (Mouse).